Consider the following 208-residue polypeptide: FMN-dependent NADH:quinone oxidoreductase (208 aa).

Residues 17–19 (SNS), 99–102 (MWNL), and 143–146 (SRGG) contribute to the FMN site.

The protein belongs to the azoreductase type 1 family. Homodimer. It depends on FMN as a cofactor.

It catalyses the reaction 2 a quinone + NADH + H(+) = 2 a 1,4-benzosemiquinone + NAD(+). The catalysed reaction is N,N-dimethyl-1,4-phenylenediamine + anthranilate + 2 NAD(+) = 2-(4-dimethylaminophenyl)diazenylbenzoate + 2 NADH + 2 H(+). Functionally, quinone reductase that provides resistance to thiol-specific stress caused by electrophilic quinones. Its function is as follows. Also exhibits azoreductase activity. Catalyzes the reductive cleavage of the azo bond in aromatic azo compounds to the corresponding amines. The sequence is that of FMN-dependent NADH:quinone oxidoreductase from Staphylococcus haemolyticus (strain JCSC1435).